The following is a 158-amino-acid chain: Transcription elongation factor GreA (158 aa).

Residues 47 to 75 (ENSEYDAAKDEQAFVEQRITQVEKMIRNA) adopt a coiled-coil conformation.

The protein belongs to the GreA/GreB family.

Its function is as follows. Necessary for efficient RNA polymerase transcription elongation past template-encoded arresting sites. The arresting sites in DNA have the property of trapping a certain fraction of elongating RNA polymerases that pass through, resulting in locked ternary complexes. Cleavage of the nascent transcript by cleavage factors such as GreA or GreB allows the resumption of elongation from the new 3'terminus. GreA releases sequences of 2 to 3 nucleotides. This chain is Transcription elongation factor GreA, found in Oceanobacillus iheyensis (strain DSM 14371 / CIP 107618 / JCM 11309 / KCTC 3954 / HTE831).